Reading from the N-terminus, the 384-residue chain is NAD-capped RNA hydrolase NPY1 (384 aa).

Zn(2+) contacts are provided by cysteine 179, cysteine 182, cysteine 197, and cysteine 206. The Nudix hydrolase domain maps to 219-351; that stretch reads PRTDPTVIIA…AGGYRVPFKN (133 aa). Residues alanine 256, glutamate 272, glutamate 276, and glutamate 322 each coordinate Mg(2+). Substrate is bound by residues 256-258, glutamate 272, glutamate 276, and glutamate 322; that span reads AGF. The Nudix box signature appears at 257-278; that stretch reads GFMEPSETIEEACIREIWEETG. The Microbody targeting signal signature appears at 378-380; it reads KTS.

It belongs to the Nudix hydrolase family. NudC subfamily. In terms of assembly, homodimer. Requires Mg(2+) as cofactor. It depends on Zn(2+) as a cofactor.

It localises to the peroxisome. It catalyses the reaction a 5'-end NAD(+)-phospho-ribonucleoside in mRNA + H2O = a 5'-end phospho-adenosine-phospho-ribonucleoside in mRNA + beta-nicotinamide D-ribonucleotide + 2 H(+). It carries out the reaction NAD(+) + H2O = beta-nicotinamide D-ribonucleotide + AMP + 2 H(+). The catalysed reaction is NADH + H2O = reduced beta-nicotinamide D-ribonucleotide + AMP + 2 H(+). MRNA decapping enzyme that specifically removes the nicotinamide adenine dinucleotide (NAD) cap from a subset of mRNAs by hydrolyzing the diphosphate linkage to produce nicotinamide mononucleotide (NMN) and 5' monophosphate mRNA. The NAD-cap is present at the 5'-end of some RNAs; in contrast to the canonical N7 methylguanosine (m7G) cap, the NAD cap promotes mRNA decay. Mediates the hydrolysis of some nucleoside diphosphate derivatives. The chain is NAD-capped RNA hydrolase NPY1 from Saccharomyces cerevisiae (strain ATCC 204508 / S288c) (Baker's yeast).